Reading from the N-terminus, the 139-residue chain is Putative nickel-responsive regulator (139 aa).

Ni(2+)-binding residues include H79, H90, H92, and C98.

It belongs to the transcriptional regulatory CopG/NikR family. Ni(2+) serves as cofactor.

Functionally, transcriptional regulator. The chain is Putative nickel-responsive regulator from Lawsonia intracellularis (strain PHE/MN1-00).